The sequence spans 693 residues: Nitric oxide-associated protein 1 (693 aa).

The interval 43-67 is disordered; it reads RASSLGRRVPPSSTATEDYAEGPDT. Residue tyrosine 76 is modified to Phosphotyrosine. Residues 203-504 enclose the CP-type G domain; sequence LELVSAALRR…FYDTPGITKE (302 aa). Residues 286 to 307 are disordered; the sequence is GPQYPAGDEPLEEIKNQNPSSR.

It belongs to the TRAFAC class YlqF/YawG GTPase family. NOA1 subfamily. As to quaternary structure, homodimer or multimer. Interacts with mitochondrial complex I, DAP3, MRPL12 and MRPS27. Expressed in tissues associated with high mitochondria content including testes, heart, liver, brain and thymus. Also expressed in various bone cell lines.

It localises to the mitochondrion inner membrane. Involved in regulation of mitochondrial protein translation and respiration. Plays a role in mitochondria-mediated cell death. May act as a scaffolding protein or stabilizer of respiratory chain supercomplexes. Binds GTP. This is Nitric oxide-associated protein 1 (Noa1) from Mus musculus (Mouse).